Consider the following 77-residue polypeptide: MAPCRTMMVLLCFVLFLAASSSCVAAARIGATMEMKKNIKRLTFKNSHIFGYLPKGVPIPPSAPSKRHNSFVNSLPH.

Positions Met-1–Ala-26 are cleaved as a signal peptide. The tract at residues Gly-56 to Asn-69 is RLK5-binding.

In terms of assembly, interaction with RLK5. As to expression, expressed specifically in the floral abscission zone.

The protein localises to the secreted. It localises to the extracellular space. Its function is as follows. Involved in an ethylene-independent separation step of floral abscission. Promotes abscission zone (AZ) cells rounding. May act with RLK5 and HSL2 as ligand-receptor pairs. The sequence is that of Protein IDA from Arabidopsis thaliana (Mouse-ear cress).